The following is a 526-amino-acid chain: Arginine/ornithine antiporter ArcD1 (526 aa).

14 helical membrane passes run 8–28 (GIGLAALVAIIVSGAIGGGVF), 41–61 (GGVVISWIVIGFGILMLVLSL), 88–108 (FISGWGYWLSAWAGNIAFAVL), 128–148 (LTILSVIVVSIVSWGLTLLVM), 160–180 (IVLVAKLIPLFVFVIAGIVTF), 220–240 (VKGSLMVMIWVFVGIEGAAMM), 255–275 (IFGLIALLVIYILLSLLPFGF), 297–317 (VGGWGGSLMAIGLVISLLGAW), 354–374 (LLLTQLIVQIFLIVTYFVADA), 378–398 (FVYLCTAVIMICYALVGLYLF), 407–427 (TSNIIIGFIAAAFQILALYYS), 428–448 (GWQFVWLSLILYAVGFILYAL), 466–486 (FILTVLGILAVFGVYGNWLGL), and 495–515 (NTLLVAVVPLIVVTFIVYFVV).

Belongs to the amino acid-polyamine-organocation (APC) superfamily. Basic amino acid/polyamine antiporter (APA) (TC 2.A.3.2) family.

It is found in the cell membrane. It carries out the reaction L-ornithine(in) + L-arginine(out) = L-ornithine(out) + L-arginine(in). Its function is as follows. Catalyzes electroneutral exchange between L-arginine and L-ornithine. Can also efficiently translocate L-histidine and L-lysine. ArcD1 is the main L-arginine/L-ornithine exchanger in the arginine deiminase (ADI) pathway. The protein is Arginine/ornithine antiporter ArcD1 of Lactococcus lactis subsp. cremoris (strain MG1363).